A 219-amino-acid chain; its full sequence is Protein matrimony (219 aa).

Residues 74–99 (PPAKAHPHPHQHQHHHHHHKHIHRTQ) are compositionally biased toward basic residues. Positions 74 to 104 (PPAKAHPHPHQHQHHHHHHKHIHRTQLKPPP) are disordered. An SAM domain is found at 159–219 (NHAANVEQIL…NRIMDVLQTL (61 aa)).

In terms of assembly, interacts with polo. Interacts with cort. Post-translationally, probably ubiquitinated: degraded during the oocyte-to-embryo transition by the anaphase promoting complex/cyclosome (APC/C) containing cort protein.

The protein localises to the nucleus. Its subcellular location is the chromosome. Its function is as follows. Polo kinase inhibitor required to maintain G2 arrest in the meiotic cell cycle in females. Holds heterochromatically paired homologs together from the end of pachytene until metaphase I. Haploinsufficient locus for homologous achiasmate segregation and may be required for the maintenance of heterochromatic pairings. This Drosophila yakuba (Fruit fly) protein is Protein matrimony (mtrm).